The chain runs to 1925 residues: Diacylglycerol kinase eta (1925 aa).

Positions 82-175 (AIIREGYLMK…WLGSLKTATA (94 aa)) constitute a PH domain. Phorbol-ester/DAG-type zinc fingers lie at residues 195–245 (HHHW…IANC) and 268–319 (PHQW…PIVC). In terms of domain architecture, DAGKc spans 350-486 (GNFSPLLVFV…DRWSIMVFEK (137 aa)). 8 disordered regions span residues 620–641 (EKDN…SEKE), 783–805 (ANID…TPTE), 847–872 (DKER…SEPQ), 1013–1065 (TTLC…NPQQ), 1113–1141 (DRNS…TRTY), 1167–1234 (NTTT…SSAS), 1256–1276 (IRRH…KDKD), and 1385–1405 (FSAG…PTEE). A compositionally biased stretch (polar residues) spans 792–802 (LSPSSEAGENT). Over residues 863–872 (ADVNEKSEPQ) the composition is skewed to basic and acidic residues. Positions 1115-1128 (NSGDNHNDNGKNEE) are enriched in basic and acidic residues. Positions 1167–1187 (NTTTSTSSSISTTTTTSTTST) are enriched in low complexity. Residues 1386-1405 (SAGDKDEKPGKDKERTPTEE) show a composition bias toward basic and acidic residues. The 64-residue stretch at 1862–1925 (WSVNEVVTWL…LQAIKDLSEN (64 aa)) folds into the SAM domain.

It belongs to the eukaryotic diacylglycerol kinase family.

Its subcellular location is the cytoplasm. It carries out the reaction a 1,2-diacyl-sn-glycerol + ATP = a 1,2-diacyl-sn-glycero-3-phosphate + ADP + H(+). Functionally, phosphorylates diacylglycerol (DAG) to generate phosphatidic acid (PA). This Drosophila mojavensis (Fruit fly) protein is Diacylglycerol kinase eta.